We begin with the raw amino-acid sequence, 110 residues long: Flagellar hook-basal body complex protein FliE (110 aa).

Belongs to the FliE family.

The protein localises to the bacterial flagellum basal body. The polypeptide is Flagellar hook-basal body complex protein FliE (Bordetella petrii (strain ATCC BAA-461 / DSM 12804 / CCUG 43448)).